Reading from the N-terminus, the 525-residue chain is Phosphoenolpyruvate carboxykinase (ATP) (525 aa).

The substrate site is built by Arg-54, Tyr-190, and Lys-196. ATP is bound by residues Lys-196, His-215, and 231–239 (GLSGTGKTT). Lys-196 and His-215 together coordinate Mn(2+). Position 252 (Asp-252) interacts with Mn(2+). ATP is bound by residues Glu-280, Arg-316, and Thr-441. Arg-316 serves as a coordination point for substrate.

This sequence belongs to the phosphoenolpyruvate carboxykinase (ATP) family. Mn(2+) is required as a cofactor.

Its subcellular location is the cytoplasm. The enzyme catalyses oxaloacetate + ATP = phosphoenolpyruvate + ADP + CO2. It participates in carbohydrate biosynthesis; gluconeogenesis. Its function is as follows. Involved in the gluconeogenesis. Catalyzes the conversion of oxaloacetate (OAA) to phosphoenolpyruvate (PEP) through direct phosphoryl transfer between the nucleoside triphosphate and OAA. The protein is Phosphoenolpyruvate carboxykinase (ATP) of Nitratiruptor sp. (strain SB155-2).